The sequence spans 209 residues: Pyridoxine/pyridoxamine 5'-phosphate oxidase (209 aa).

Residues 7–10 and K64 each bind substrate; that span reads REDY. FMN-binding positions include 59-64, 74-75, R80, and K81; these read RIVLLK and FT. Y121, R125, and S129 together coordinate substrate. FMN contacts are provided by residues 138–139 and W182; that span reads QS. A substrate-binding site is contributed by 188-190; that stretch reads RLH. R192 serves as a coordination point for FMN.

This sequence belongs to the pyridoxamine 5'-phosphate oxidase family. In terms of assembly, homodimer. Requires FMN as cofactor.

The enzyme catalyses pyridoxamine 5'-phosphate + O2 + H2O = pyridoxal 5'-phosphate + H2O2 + NH4(+). It carries out the reaction pyridoxine 5'-phosphate + O2 = pyridoxal 5'-phosphate + H2O2. It participates in cofactor metabolism; pyridoxal 5'-phosphate salvage; pyridoxal 5'-phosphate from pyridoxamine 5'-phosphate: step 1/1. The protein operates within cofactor metabolism; pyridoxal 5'-phosphate salvage; pyridoxal 5'-phosphate from pyridoxine 5'-phosphate: step 1/1. Its function is as follows. Catalyzes the oxidation of either pyridoxine 5'-phosphate (PNP) or pyridoxamine 5'-phosphate (PMP) into pyridoxal 5'-phosphate (PLP). This chain is Pyridoxine/pyridoxamine 5'-phosphate oxidase, found in Actinobacillus pleuropneumoniae serotype 3 (strain JL03).